A 192-amino-acid chain; its full sequence is Cytochrome b-245 light chain (192 aa).

Topologically, residues 2-7 are cytoplasmic; it reads GQIEWA. Residues 8 to 30 form a helical membrane-spanning segment; that stretch reads MWANEQALASGLILITGGIVATA. The Extracellular segment spans residues 31 to 35; that stretch reads GRFTQ. Residues 36-53 traverse the membrane as a helical segment; that stretch reads WYFGAYSIVAGVLICLLE. The Cytoplasmic segment spans residues 54-69; that stretch reads YPRGKRKKGSTMERCG. An intramembrane segment occupies 70 to 80; the sequence is QKYLTAVVKLF. Residues 81–86 are Cytoplasmic-facing; the sequence is GPLTRN. A helical membrane pass occupies residues 87–104; sequence YYVRAVLHLLLSVPAGFL. Position 105 (L105) is a topological domain, extracellular. Residues 106–126 traverse the membrane as a helical segment; it reads ATILGTVCLAIASVIYLLAAI. The Cytoplasmic segment spans residues 127–192; it reads RGEQWTPIEP…NPIPVTDEVV (66 aa). Positions 134 to 192 are disordered; it reads IEPKPKERPQVGGTIKQPPTNPPPRPPAEVRKKPSEAEEEAASAGGPQVNPIPVTDEVV. The residue at position 147 (T147) is a Phosphothreonine. K149 is covalently cross-linked (Glycyl lysine isopeptide (Lys-Gly) (interchain with G-Cter in ubiquitin)). 2 positions are modified to phosphoserine: S168 and S176.

Belongs to the p22phox family. Component of the phagocyte NADPH oxidase core complex/cytochrome b558 complex, composed of CYBB (heavy chain (beta)) and CYBA (light chain (alpha)). Component of the phagocyte NADPH oxidase complex composed of an obligatory core heterodimer formed by the membrane proteins CYBA and CYBB and the cytosolic regulatory subunits NCF1/p47-phox, NCF2/p67-phox, NCF4/p40-phox and the small GTPase RAC1 or RAC2. Interacts with NCF1 (via SH3 domain). Interacts with SH3PXD2A. Interacts with DUOX1, DUOX2 and TPO. Interacts with NOX4; this interaction mediates superoxide generation. Interacts with calprotectin (S100A8/9). Interacts with GBP7. Interacts with NOXO1. Forms a heterodimer with NOX3 and is essential for activity and cell membrane localization of NOX3. Interacts with NOX1. Post-translationally, phosphorylation at Thr-147 enhances NADPH oxidase activity by promoting NCF1/p47-phox binding. Ubiquitinated at Lys-149 likely by RNF145. As to expression, expressed to a relatively high level in kidney, spleen, thymus and lung, and to a lower level in aorta, adrenals, and heart. Expression is not detected in liver or brain.

It localises to the cell membrane. Functionally, subunit of NADPH oxidase complexes that is required for the NADPH oxidase activity that generates, in various cell types, superoxide from molecular oxygen utilizing NADPH as an electron donor. Subunit of the phagocyte NADPH oxidase complex that mediates the transfer of electrons from cytosolic NADPH to O2 to produce the superoxide anion (O2(-)). In the activated complex, electrons are first transferred from NADPH to flavin adenine dinucleotide (FAD) and subsequently transferred via two heme molecules to molecular oxygen, producing superoxide through an outer-sphere reaction. Activation of the NADPH oxidase complex is initiated by the assembly of cytosolic subunits of the NADPH oxidase complex with the core NADPH oxidase complex to form a complex at the plasma membrane or phagosomal membrane. This activation process is initiated by phosphorylation dependent binding of the cytosolic NCF1/p47-phox subunit to the C-terminus of CYBA/p22-phox. Aassociates with NOX3 to form a functional NADPH oxidase constitutively generating superoxide. In Rattus norvegicus (Rat), this protein is Cytochrome b-245 light chain.